Reading from the N-terminus, the 567-residue chain is Septation ring formation regulator EzrA (567 aa).

Residues 1 to 2 are Extracellular-facing; the sequence is MG. The helical transmembrane segment at 3 to 21 threads the bilayer; it reads MAWIVLLLGAGAIIYNHVY. The Cytoplasmic segment spans residues 22-567; that stretch reads RKRMYREIDR…LWQEDNSREQ (546 aa). Coiled coils occupy residues 98–159 and 251–497; these read YRQA…AYRY and HMER…IEQA.

The protein belongs to the EzrA family.

The protein localises to the cell membrane. Negative regulator of FtsZ ring formation; modulates the frequency and position of FtsZ ring formation. Inhibits FtsZ ring formation at polar sites. Interacts either with FtsZ or with one of its binding partners to promote depolymerization. This chain is Septation ring formation regulator EzrA, found in Geobacillus kaustophilus (strain HTA426).